The sequence spans 291 residues: Urease accessory protein UreD (291 aa).

It belongs to the UreD family. As to quaternary structure, ureD, UreF and UreG form a complex that acts as a GTP-hydrolysis-dependent molecular chaperone, activating the urease apoprotein by helping to assemble the nickel containing metallocenter of UreC. The UreE protein probably delivers the nickel.

Its subcellular location is the cytoplasm. In terms of biological role, required for maturation of urease via the functional incorporation of the urease nickel metallocenter. This Acinetobacter baumannii (strain ATCC 17978 / DSM 105126 / CIP 53.77 / LMG 1025 / NCDC KC755 / 5377) protein is Urease accessory protein UreD.